The primary structure comprises 201 residues: Troponin I (201 aa).

Alanine 1 is subject to N-acetylalanine. Residues 1-33 show a composition bias toward basic and acidic residues; the sequence is ADKAKAAEEAKKKQDDIDRKKAEVRKRLEEQSL. A disordered region spans residues 1-45; it reads ADKAKAAEEAKKKQDDIDRKKAEVRKRLEEQSLKKQKKGFMTPER. Residues 108 to 117 form a troponin T-interaction region; that stretch reads IESDKYDVEL. The interval 135–148 is actin-binding; it reads DLRGKFIKPTLKKV. Lysine 142 and lysine 146 each carry N6,N6,N6-trimethyllysine. Residues 182 to 201 form a disordered region; that stretch reads EDDKGATEGDGPAAEEVAAE.

It belongs to the troponin I family.

Its function is as follows. Troponin I is the actomyosin ATPase inhibitory subunit present in the thin filament regulatory complex. This chain is Troponin I, found in Astacus leptodactylus (Turkish narrow-clawed crayfish).